The primary structure comprises 241 residues: ATP synthase subunit a (241 aa).

The next 7 membrane-spanning stretches (helical) occupy residues 27–47 (NCSLVMVLASVSSILLLCWAL), 52–72 (VVPGPSQTAVELIYGFVANTL), 87–107 (VMTTFLFVLACNLVGILPFGF), 112–132 (HLSVTLALSLVVCTAITVIGF), 142–162 (IFLPEGTPLWLAPMMVFIKLF), 175–195 (LAANMIAGHTIIAVIADFVLK), and 198–218 (LVLAPLPFAFIMGLIAFEIFV).

Belongs to the ATPase A chain family. In terms of assembly, F-type ATPases have 2 components, CF(1) - the catalytic core - and CF(0) - the membrane proton channel. CF(1) has five subunits: alpha(3), beta(3), gamma(1), delta(1), epsilon(1). CF(0) has three main subunits: a(1), b(2) and c(9-12). The alpha and beta chains form an alternating ring which encloses part of the gamma chain. CF(1) is attached to CF(0) by a central stalk formed by the gamma and epsilon chains, while a peripheral stalk is formed by the delta and b chains.

It localises to the cell inner membrane. In terms of biological role, key component of the proton channel; it plays a direct role in the translocation of protons across the membrane. This chain is ATP synthase subunit a, found in Anaplasma marginale (strain St. Maries).